The primary structure comprises 454 residues: Pyrimidine/purine nucleotide 5'-monophosphate nucleosidase (454 aa).

Belongs to the LOG family.

The enzyme catalyses a pyrimidine ribonucleoside 5'-phosphate + H2O = a pyrimidine nucleobase + D-ribose 5-phosphate. It catalyses the reaction AMP + H2O = adenine + D-ribose 5-phosphate. It carries out the reaction GMP + H2O = guanine + D-ribose 5-phosphate. The catalysed reaction is CMP + H2O = cytosine + D-ribose 5-phosphate. The enzyme catalyses IMP + H2O = hypoxanthine + D-ribose 5-phosphate. It catalyses the reaction UMP + H2O = D-ribose 5-phosphate + uracil. It carries out the reaction dTMP + H2O = 2-deoxy-D-ribose 5-phosphate + thymine. Functionally, catalyzes the hydrolysis of the N-glycosidic bond of diverse pyrimidine and purine nucleotide 5'-monophosphates, to form ribose 5-phosphate and the corresponding free base. Can use AMP, GMP, IMP, CMP, dTMP and UMP as substrates. Cannot catalyze the reverse reactions. May contribute to nucleoside pool homeostasis by degrading excess nucleotides and feeding back the ribose moiety to catabolism. This Escherichia coli O157:H7 protein is Pyrimidine/purine nucleotide 5'-monophosphate nucleosidase.